The chain runs to 266 residues: Zinc transport system ATP-binding protein TroB (266 aa).

The 233-residue stretch at 11 to 243 (VQVDDLTLAY…YVQRAYGGRI (233 aa)) folds into the ABC transporter domain. 43 to 50 (GPNGAGKS) serves as a coordination point for ATP.

It belongs to the ABC transporter superfamily.

Part of an ATP-driven transport system TroABCD for zinc. This chain is Zinc transport system ATP-binding protein TroB (troB), found in Treponema pallidum (strain Nichols).